Consider the following 484-residue polypeptide: Endoglucanase 3 (484 aa).

A signal peptide spans 1–21 (MASPFFFVFLLSALSLENTYA). The Nucleophile role is filled by aspartate 77. An N-linked (GlcNAc...) asparagine glycan is attached at asparagine 370. Catalysis depends on residues histidine 402, aspartate 453, and glutamate 462.

It belongs to the glycosyl hydrolase 9 (cellulase E) family. As to expression, specifically expressed in root cap cells.

Its subcellular location is the secreted. The catalysed reaction is Endohydrolysis of (1-&gt;4)-beta-D-glucosidic linkages in cellulose, lichenin and cereal beta-D-glucans.. Its function is as follows. May be involved in the sloughing (cell-cell separation) of the root cap cells from root tip. The protein is Endoglucanase 3 (CEL5) of Arabidopsis thaliana (Mouse-ear cress).